Consider the following 354-residue polypeptide: Serine/threonine-protein phosphatase 2A activator 2 (354 aa).

It belongs to the PTPA-type PPIase family.

The protein resides in the cytoplasm. The enzyme catalyses [protein]-peptidylproline (omega=180) = [protein]-peptidylproline (omega=0). Functionally, PPIases accelerate the folding of proteins. It catalyzes the cis-trans isomerization of proline imidic peptide bonds in oligopeptides. Acts as a regulatory subunit for PP2A-like phosphatases modulating their activity or substrate specificity, probably by inducing a conformational change in the catalytic subunit, a direct target of the PPIase. Can reactivate inactive phosphatase PP2A-phosphatase methylesterase complexes (PP2Ai) in presence of ATP and Mg(2+) by dissociating the inactive form from the complex. In Yarrowia lipolytica (strain CLIB 122 / E 150) (Yeast), this protein is Serine/threonine-protein phosphatase 2A activator 2 (RRD2).